The sequence spans 68 residues: U-poneritoxin(01)-Om4b (68 aa).

The first 25 residues, 1–25, serve as a signal peptide directing secretion; it reads MKPSGLTLAFLVVFMMAIMYNSVQA. The propeptide occupies 26 to 39; it reads EALADADAEAFAEA.

This sequence belongs to the formicidae venom precursor-01 superfamily. Homo- or heterodimer with PLP4 (AC A0A348G5W0); disulfide-linked. In terms of processing, truncated sequences of this peptide have also been found in the venom. It is possible they have been cleaved in the venom. In terms of tissue distribution, expressed by the venom gland.

It is found in the secreted. In terms of biological role, this homodimer composed of two cationic amphipathic alpha-helical peptides has antimicrobial activities against E.coli, S.aureus (MIC=3.1 uM), and S.cerevisiae (MIC=3.1 uM). It also shows histamine-releasing activity (66.4% at 10 uM) and a weak hemolytic activity (10.5% at 50 uM). In Odontomachus monticola (Trap-jaw ant), this protein is U-poneritoxin(01)-Om4b.